Reading from the N-terminus, the 210-residue chain is Small ribosomal subunit protein uS3 (210 aa).

One can recognise a KH type-2 domain in the interval Ile-17–Lys-86.

Belongs to the universal ribosomal protein uS3 family. Part of the 30S ribosomal subunit.

In terms of biological role, binds the lower part of the 30S subunit head. The chain is Small ribosomal subunit protein uS3 from Pyrococcus furiosus (strain ATCC 43587 / DSM 3638 / JCM 8422 / Vc1).